The following is a 95-amino-acid chain: Secretoglobin family 2A member 1 (95 aa).

Positions 1–18 (MKLVFLFLLVTIPICCYA) are cleaved as a signal peptide. N-linked (GlcNAc...) asparagine glycosylation is found at Asn-35 and Asn-72.

It belongs to the secretoglobin family. Lipophilin subfamily. In terms of assembly, prostatein is composed of three different peptides called C1, C2 and C3. These form covalent C1:C3 (F) and C2:C3 (S) heterodimers whose non-covalent association forms tetrameric (C1:C3/C3:C2) prostatein molecules. Expressed at very low level in ventral prostate.

It localises to the secreted. In terms of biological role, part of prostatein which is the major secretory glycoprotein of ventral prostate gland. Steroid-binding protein; can bind non-polar steroids, cholesterol and a group of small proline-rich peptides. This is Secretoglobin family 2A member 1 from Rattus norvegicus (Rat).